The following is a 131-amino-acid chain: UPF0146 protein PYRAB01940 (131 aa).

Belongs to the UPF0146 family.

This is UPF0146 protein PYRAB01940 from Pyrococcus abyssi (strain GE5 / Orsay).